A 278-amino-acid polypeptide reads, in one-letter code: Undecaprenyl-diphosphatase 2 (278 aa).

7 helical membrane-spanning segments follow: residues 43–63 (GAAF…VYFW), 88–108 (ARLG…GLFF), 119–139 (LYIT…ADRI), 149–169 (LIWR…IPGV), 194–214 (FLLA…KSIG), 226–246 (LATL…LKLV), and 254–274 (FVWY…TGVI).

This sequence belongs to the UppP family.

It is found in the cell inner membrane. It carries out the reaction di-trans,octa-cis-undecaprenyl diphosphate + H2O = di-trans,octa-cis-undecaprenyl phosphate + phosphate + H(+). Catalyzes the dephosphorylation of undecaprenyl diphosphate (UPP). Confers resistance to bacitracin. This is Undecaprenyl-diphosphatase 2 from Agrobacterium fabrum (strain C58 / ATCC 33970) (Agrobacterium tumefaciens (strain C58)).